The chain runs to 369 residues: Glutamate 5-kinase (369 aa).

K9 provides a ligand contact to ATP. Positions 49, 136, and 148 each coordinate substrate. ATP is bound by residues 168 to 169 and 210 to 216; these read TD and TGGMLTK. Residues 275–355 form the PUA domain; it reads RGSVYVDEGA…KGVFIHRDDW (81 aa).

Belongs to the glutamate 5-kinase family.

It is found in the cytoplasm. It carries out the reaction L-glutamate + ATP = L-glutamyl 5-phosphate + ADP. It participates in amino-acid biosynthesis; L-proline biosynthesis; L-glutamate 5-semialdehyde from L-glutamate: step 1/2. In terms of biological role, catalyzes the transfer of a phosphate group to glutamate to form L-glutamate 5-phosphate. In Neisseria meningitidis serogroup C / serotype 2a (strain ATCC 700532 / DSM 15464 / FAM18), this protein is Glutamate 5-kinase.